The sequence spans 87 residues: Small ribosomal subunit protein bS20 (87 aa).

The protein belongs to the bacterial ribosomal protein bS20 family.

In terms of biological role, binds directly to 16S ribosomal RNA. In Nitrosomonas europaea (strain ATCC 19718 / CIP 103999 / KCTC 2705 / NBRC 14298), this protein is Small ribosomal subunit protein bS20.